The chain runs to 407 residues: Peptidase T (407 aa).

Histidine 82 contacts Zn(2+). Aspartate 84 is a catalytic residue. Aspartate 143 lines the Zn(2+) pocket. The Proton acceptor role is filled by glutamate 177. Zn(2+) contacts are provided by glutamate 178, aspartate 200, and histidine 382.

It belongs to the peptidase M20B family. The cofactor is Zn(2+).

The protein localises to the cytoplasm. The catalysed reaction is Release of the N-terminal residue from a tripeptide.. In terms of biological role, cleaves the N-terminal amino acid of tripeptides. In Streptococcus pyogenes serotype M3 (strain ATCC BAA-595 / MGAS315), this protein is Peptidase T.